A 152-amino-acid polypeptide reads, in one-letter code: UPF0178 protein YaiI (152 aa).

The protein belongs to the UPF0178 family.

The chain is UPF0178 protein YaiI from Escherichia coli O17:K52:H18 (strain UMN026 / ExPEC).